Reading from the N-terminus, the 428-residue chain is D-serine dehydratase (428 aa).

Position 57 is an N6-(pyridoxal phosphate)lysine (Lys-57). Pyridoxal 5'-phosphate contacts are provided by Tyr-203, Tyr-210, Thr-255, Gly-286, and Asn-287. The Zn(2+) site is built by His-398 and Cys-400.

The protein belongs to the DSD1 family. As to quaternary structure, homodimer. Pyridoxal 5'-phosphate is required as a cofactor. It depends on Zn(2+) as a cofactor.

It catalyses the reaction D-serine = pyruvate + NH4(+). Sodium cyanoborohydride, N-ethylmaleimide, hydroxylamine, phenyhydrazin and EDTA are inhibitors of the catalytic activity. Its function is as follows. Catalyzes the conversion of D-serine to pyruvate and ammonia. May play a role in D-serine detoxification. The sequence is that of D-serine dehydratase from Saccharomyces cerevisiae (strain ATCC 204508 / S288c) (Baker's yeast).